Reading from the N-terminus, the 321-residue chain is D-alanine--D-alanine ligase (321 aa).

In terms of domain architecture, ATP-grasp spans 121 to 315 (RSWFLTNNIN…FTNLIEEIIK (195 aa)). 147 to 199 (PMKRPYVIKPLTQGSSIGVEVIFAEDNFNFADYDFPYGDQVIIEQYIKGRELQ) lines the ATP pocket. Residues E268, E282, and N284 each coordinate Mg(2+).

This sequence belongs to the D-alanine--D-alanine ligase family. Mg(2+) serves as cofactor. Requires Mn(2+) as cofactor.

It is found in the cytoplasm. It carries out the reaction 2 D-alanine + ATP = D-alanyl-D-alanine + ADP + phosphate + H(+). It participates in cell wall biogenesis; peptidoglycan biosynthesis. Cell wall formation. The sequence is that of D-alanine--D-alanine ligase from Rickettsia massiliae (strain Mtu5).